A 1099-amino-acid polypeptide reads, in one-letter code: DNA-directed RNA polymerase subunit beta (1099 aa).

This sequence belongs to the RNA polymerase beta chain family. As to quaternary structure, in plastids the minimal PEP RNA polymerase catalytic core is composed of four subunits: alpha, beta, beta', and beta''. When a (nuclear-encoded) sigma factor is associated with the core the holoenzyme is formed, which can initiate transcription.

The protein resides in the plastid. It localises to the chloroplast. It carries out the reaction RNA(n) + a ribonucleoside 5'-triphosphate = RNA(n+1) + diphosphate. In terms of biological role, DNA-dependent RNA polymerase catalyzes the transcription of DNA into RNA using the four ribonucleoside triphosphates as substrates. This is DNA-directed RNA polymerase subunit beta from Bigelowiella natans (Pedinomonas minutissima).